A 244-amino-acid polypeptide reads, in one-letter code: Ureidoacrylate amidohydrolase RutB (244 aa).

Residue D38 is the Proton acceptor of the active site. The active site involves K147. C180 serves as the catalytic Nucleophile.

This sequence belongs to the isochorismatase family. RutB subfamily.

It catalyses the reaction (Z)-3-ureidoacrylate + H2O + H(+) = (Z)-3-aminoacrylate + NH4(+) + CO2. The catalysed reaction is (Z)-3-ureidoacrylate + H2O = (Z)-3-aminoacrylate + carbamate + H(+). The enzyme catalyses (Z)-2-methylureidoacrylate + H2O + H(+) = (Z)-2-methylaminoacrylate + NH4(+) + CO2. Functionally, hydrolyzes ureidoacrylate to form aminoacrylate and carbamate. The carbamate hydrolyzes spontaneously, thereby releasing one of the nitrogen atoms of the pyrimidine ring as ammonia and one of its carbon atoms as CO2. This chain is Ureidoacrylate amidohydrolase RutB, found in Shigella sonnei (strain Ss046).